The chain runs to 575 residues: Suppressor of tumorigenicity 7 protein-like (575 aa).

2 helical membrane passes run 36–56 (GLAG…LYAL) and 80–100 (FYVA…IFEW). The tract at residues 125-147 (GTESSISEPGSPSRNRENETSRQ) is disordered. Polar residues predominate over residues 126–137 (TESSISEPGSPS).

It belongs to the ST7 family.

Its subcellular location is the membrane. This chain is Suppressor of tumorigenicity 7 protein-like (ST7L), found in Homo sapiens (Human).